Here is a 303-residue protein sequence, read N- to C-terminus: Large ribosomal subunit protein uL1m (303 aa).

This sequence belongs to the universal ribosomal protein uL1 family. As to quaternary structure, component of the mitochondrial large ribosomal subunit (mt-LSU). Mature N.crassa 74S mitochondrial ribosomes consist of a small (37S) and a large (54S) subunit. The 37S small subunit contains a 16S ribosomal RNA (16S mt-rRNA) and 32 different proteins. The 54S large subunit contains a 23S rRNA (23S mt-rRNA) and 42 different proteins.

The protein localises to the mitochondrion. Component of the mitochondrial ribosome (mitoribosome), a dedicated translation machinery responsible for the synthesis of mitochondrial genome-encoded proteins, including at least some of the essential transmembrane subunits of the mitochondrial respiratory chain. The mitoribosomes are attached to the mitochondrial inner membrane and translation products are cotranslationally integrated into the membrane. The sequence is that of Large ribosomal subunit protein uL1m (mrpl1) from Neurospora crassa (strain ATCC 24698 / 74-OR23-1A / CBS 708.71 / DSM 1257 / FGSC 987).